A 493-amino-acid polypeptide reads, in one-letter code: Guanosine-5'-triphosphate,3'-diphosphate pyrophosphatase (493 aa).

It belongs to the GppA/Ppx family. GppA subfamily.

It carries out the reaction guanosine 3'-diphosphate 5'-triphosphate + H2O = guanosine 3',5'-bis(diphosphate) + phosphate + H(+). It participates in purine metabolism; ppGpp biosynthesis; ppGpp from GTP: step 2/2. Its function is as follows. Catalyzes the conversion of pppGpp to ppGpp. Guanosine pentaphosphate (pppGpp) is a cytoplasmic signaling molecule which together with ppGpp controls the 'stringent response', an adaptive process that allows bacteria to respond to amino acid starvation, resulting in the coordinated regulation of numerous cellular activities. This is Guanosine-5'-triphosphate,3'-diphosphate pyrophosphatase from Salmonella paratyphi B (strain ATCC BAA-1250 / SPB7).